We begin with the raw amino-acid sequence, 190 residues long: Putative manganese efflux pump MntP (190 aa).

The next 6 helical transmembrane spans lie at Met-3–Gly-23, Leu-41–Ala-61, Ser-62–Gly-82, Leu-105–Ala-127, Ala-143–Gly-163, and Val-168–Tyr-188.

Belongs to the MntP (TC 9.B.29) family.

It is found in the cell inner membrane. In terms of biological role, probably functions as a manganese efflux pump. This chain is Putative manganese efflux pump MntP, found in Pectobacterium carotovorum subsp. carotovorum (strain PC1).